Reading from the N-terminus, the 156-residue chain is Ribonuclease H (156 aa).

The RNase H type-1 domain occupies 1–142 (MGKQVEIFTD…CDELARAAAN (142 aa)). The Mg(2+) site is built by D10, E48, D70, and D134.

It belongs to the RNase H family. As to quaternary structure, monomer. Mg(2+) serves as cofactor.

The protein resides in the cytoplasm. It carries out the reaction Endonucleolytic cleavage to 5'-phosphomonoester.. In terms of biological role, endonuclease that specifically degrades the RNA of RNA-DNA hybrids. This Photorhabdus laumondii subsp. laumondii (strain DSM 15139 / CIP 105565 / TT01) (Photorhabdus luminescens subsp. laumondii) protein is Ribonuclease H.